The following is a 454-amino-acid chain: Ribosomal protein uS12 methylthiotransferase RimO (454 aa).

Positions Ser-14–Lys-125 constitute an MTTase N-terminal domain. 6 residues coordinate [4Fe-4S] cluster: Cys-23, Cys-59, Cys-88, Cys-163, Cys-167, and Cys-170. A Radical SAM core domain is found at Asp-149 to Asp-378. One can recognise a TRAM domain in the interval Gln-381–Lys-452.

Belongs to the methylthiotransferase family. RimO subfamily. [4Fe-4S] cluster serves as cofactor.

The protein localises to the cytoplasm. It carries out the reaction L-aspartate(89)-[ribosomal protein uS12]-hydrogen + (sulfur carrier)-SH + AH2 + 2 S-adenosyl-L-methionine = 3-methylsulfanyl-L-aspartate(89)-[ribosomal protein uS12]-hydrogen + (sulfur carrier)-H + 5'-deoxyadenosine + L-methionine + A + S-adenosyl-L-homocysteine + 2 H(+). Functionally, catalyzes the methylthiolation of an aspartic acid residue of ribosomal protein uS12. The protein is Ribosomal protein uS12 methylthiotransferase RimO of Prochlorococcus marinus (strain MIT 9312).